The chain runs to 109 residues: Cell division protein ZapA (109 aa).

Residues 21–97 (PDQRDALNQA…QTIEQALLDQ (77 aa)) adopt a coiled-coil conformation.

The protein belongs to the ZapA family. Type 1 subfamily. In terms of assembly, homodimer. Interacts with FtsZ.

The protein localises to the cytoplasm. Its function is as follows. Activator of cell division through the inhibition of FtsZ GTPase activity, therefore promoting FtsZ assembly into bundles of protofilaments necessary for the formation of the division Z ring. It is recruited early at mid-cell but it is not essential for cell division. The chain is Cell division protein ZapA from Salmonella agona (strain SL483).